The following is a 274-amino-acid chain: Thiamine kinase (274 aa).

This sequence belongs to the thiamine kinase family.

The enzyme catalyses thiamine + ATP = thiamine phosphate + ADP + H(+). The protein operates within cofactor biosynthesis; thiamine diphosphate biosynthesis; thiamine phosphate from thiamine: step 1/1. Its function is as follows. Catalyzes the ATP-dependent phosphorylation of thiamine to thiamine phosphate. Is involved in thiamine salvage. The chain is Thiamine kinase from Escherichia coli O157:H7.